The chain runs to 156 residues: Small ribosomal subunit protein uS7c (156 aa).

Belongs to the universal ribosomal protein uS7 family. Part of the 30S ribosomal subunit.

It is found in the plastid. The protein localises to the chloroplast. Its function is as follows. One of the primary rRNA binding proteins, it binds directly to 16S rRNA where it nucleates assembly of the head domain of the 30S subunit. This Zamia furfuracea (Cardboard cycad) protein is Small ribosomal subunit protein uS7c (rps7).